Consider the following 396-residue polypeptide: Stearoyl-[acyl-carrier-protein] 9-desaturase 2, chloroplastic (396 aa).

A chloroplast-targeting transit peptide spans 1–32; it reads MALRPNDVTLRLTPPLAAAARRNRRAAAGGVR. 6 residues coordinate Fe cation: E138, E176, H179, E229, E262, and H265.

Belongs to the fatty acid desaturase type 2 family. In terms of assembly, homodimer. Fe(2+) is required as a cofactor.

The protein resides in the plastid. The protein localises to the chloroplast. The enzyme catalyses octadecanoyl-[ACP] + 2 reduced [2Fe-2S]-[ferredoxin] + O2 + 2 H(+) = (9Z)-octadecenoyl-[ACP] + 2 oxidized [2Fe-2S]-[ferredoxin] + 2 H2O. It functions in the pathway lipid metabolism; fatty acid metabolism. Converts stearoyl-ACP to oleoyl-ACP by introduction of a cis double bond between carbons 9 and 10 of the acyl chain. Required for the repression of the salicylic acid (SA) signaling pathway. The chain is Stearoyl-[acyl-carrier-protein] 9-desaturase 2, chloroplastic (SSI2) from Oryza sativa subsp. indica (Rice).